We begin with the raw amino-acid sequence, 136 residues long: Large ribosomal subunit protein uL16 (136 aa).

This sequence belongs to the universal ribosomal protein uL16 family. As to quaternary structure, part of the 50S ribosomal subunit.

Its function is as follows. Binds 23S rRNA and is also seen to make contacts with the A and possibly P site tRNAs. The chain is Large ribosomal subunit protein uL16 from Glaesserella parasuis serovar 5 (strain SH0165) (Haemophilus parasuis).